Consider the following 279-residue polypeptide: Large ribosomal subunit protein uL2 (279 aa).

Positions 218-279 are disordered; that stretch reads RPQTRGSAMN…ITRRKSNPKR (62 aa). A compositionally biased stretch (basic residues) spans 255–279; the sequence is KGSKTRRKKASDKLIITRRKSNPKR.

The protein belongs to the universal ribosomal protein uL2 family. Part of the 50S ribosomal subunit. Forms a bridge to the 30S subunit in the 70S ribosome.

Functionally, one of the primary rRNA binding proteins. Required for association of the 30S and 50S subunits to form the 70S ribosome, for tRNA binding and peptide bond formation. It has been suggested to have peptidyltransferase activity; this is somewhat controversial. Makes several contacts with the 16S rRNA in the 70S ribosome. This Sulfurimonas denitrificans (strain ATCC 33889 / DSM 1251) (Thiomicrospira denitrificans (strain ATCC 33889 / DSM 1251)) protein is Large ribosomal subunit protein uL2.